Consider the following 145-residue polypeptide: Protein H2A.5 (145 aa).

Positions 118-145 are disordered; that stretch reads SPAAAEKEAKSQKAAAKSPKKKTAATKE. The SPKK motif motif lies at 135–138; it reads SPKK. Residues 135–145 show a composition bias toward basic residues; the sequence is SPKKKTAATKE.

Belongs to the histone H2A family. The nucleosome is a histone octamer containing two molecules each of H2A, H2B, H3 and H4 assembled in one H3-H4 heterotetramer and two H2A-H2B heterodimers. The octamer wraps approximately 147 bp of DNA. In terms of tissue distribution, abundant in meristematic tissues.

The protein resides in the nucleus. Its subcellular location is the chromosome. Core component of nucleosome. Nucleosomes wrap and compact DNA into chromatin, limiting DNA accessibility to the cellular machineries which require DNA as a template. Histones thereby play a central role in transcription regulation, DNA repair, DNA replication and chromosomal stability. DNA accessibility is regulated via a complex set of post-translational modifications of histones, also called histone code, and nucleosome remodeling. This chain is Protein H2A.5 (H2A-2), found in Triticum aestivum (Wheat).